We begin with the raw amino-acid sequence, 339 residues long: Serine/threonine-protein kinase pdik1l-A (339 aa).

The region spanning 8 to 332 is the Protein kinase domain; it reads YDLIREVGRG…LELKLIQIAF (325 aa). ATP-binding positions include 14 to 22 and lysine 37; that span reads VGRGSYGVV. Aspartate 164 serves as the catalytic Proton acceptor.

This sequence belongs to the protein kinase superfamily. Ser/Thr protein kinase family.

It localises to the nucleus. The catalysed reaction is L-seryl-[protein] + ATP = O-phospho-L-seryl-[protein] + ADP + H(+). It carries out the reaction L-threonyl-[protein] + ATP = O-phospho-L-threonyl-[protein] + ADP + H(+). In Xenopus laevis (African clawed frog), this protein is Serine/threonine-protein kinase pdik1l-A (pdik1-a).